Consider the following 395-residue polypeptide: L-rhamnonate dehydratase (395 aa).

The substrate site is built by histidine 23 and arginine 49. Mg(2+) contacts are provided by aspartate 215, glutamate 241, and glutamate 269. Residue histidine 319 is the Proton acceptor of the active site. Glutamate 339 provides a ligand contact to substrate.

Belongs to the mandelate racemase/muconate lactonizing enzyme family. RhamD subfamily. Homooctamer; tetramer of dimers. Mg(2+) is required as a cofactor.

It carries out the reaction L-rhamnonate = 2-dehydro-3-deoxy-L-rhamnonate + H2O. Functionally, catalyzes the dehydration of L-rhamnonate to 2-keto-3-deoxy-L-rhamnonate (KDR). The chain is L-rhamnonate dehydratase (rhmD) from Polaromonas sp. (strain JS666 / ATCC BAA-500).